Reading from the N-terminus, the 428-residue chain is C4-dicarboxylate transport protein (428 aa).

8 helical membrane passes run 8 to 28 (SLYF…HFYP), 44 to 64 (LIKM…IAGM), 76 to 96 (VALL…LIIV), 142 to 162 (IGAF…LFGF), 184 to 206 (VIFG…AMAF), 222 to 242 (LIIC…GSIA), 326 to 346 (IVHQ…AAGV), and 352 to 372 (IVLA…LALI).

Belongs to the dicarboxylate/amino acid:cation symporter (DAACS) (TC 2.A.23) family.

It localises to the cell inner membrane. Responsible for the transport of dicarboxylates such as succinate, fumarate, and malate from the periplasm across the membrane. The chain is C4-dicarboxylate transport protein from Shigella flexneri.